Here is an 815-residue protein sequence, read N- to C-terminus: Dual specificity tyrosine-phosphorylation-regulated kinase mbk-2 (815 aa).

Disordered stretches follow at residues 1–49 (MAAL…NYTR), 67–146 (PSSF…PLGT), 185–204 (YEFP…SQQH), and 298–395 (ALPS…FRPE). 2 stretches are compositionally biased toward polar residues: residues 7–25 (FTRN…TQQG) and 40–49 (SKMSNINYTR). The segment covering 68–78 (SSFSGASSSSS) has biased composition (low complexity). 2 stretches are compositionally biased toward polar residues: residues 119–140 (SGNT…TSNL) and 190–204 (GQAQ…SQQH). Over residues 301-316 (SVGTSSSNGSSNSSSG) the composition is skewed to low complexity. The span at 325 to 351 (LMTQSIGGPNKHLSASHSTLNTASTHD) shows a compositional bias: polar residues. Phosphoserine; by cdk-1 is present on Ser361. The segment covering 363-391 (SNESLSRSHTSSSGGSQGGHNSNSGSNSG) has biased composition (low complexity). A Protein kinase domain is found at 460-773 (YEVLKVIGKG…PAQALKHKWL (314 aa)). ATP contacts are provided by residues 466-474 (IGKGSFGQV) and Lys489. Asp586 acts as the Proton acceptor in catalysis. Tyr620 is subject to Phosphotyrosine; by autocatalysis.

Belongs to the protein kinase superfamily. CMGC Ser/Thr protein kinase family. MNB/DYRK subfamily. Part of a complex, consisting of pseudophosphatases egg-3, egg-4, egg-5 and kinase mbk-2. Interacts (via Tyr-618 and Tyr-620) with egg-4 (via tyrosine-protein phosphatase domain) and egg-5 (via tyrosine-protein phosphatase domain); mbk-2 tyrosine phosphorylation enhances the interaction. The interaction inhibits mbk-2 kinase activity and is required for mbk-2 oocyte cortex localization. Interacts (via N-terminus) with egg-3 (via tyrosine-protein phosphatase domain); the interaction does not affect mbk-2 kinase activity, is enhanced by mbk-2 tyrosine phosphorylation status and requires prior binding of mbk-2 to egg-4 and egg-5. It depends on Mg(2+) as a cofactor. In terms of processing, autophosphorylated.

It localises to the cytoplasm. It is found in the cell cortex. The enzyme catalyses L-seryl-[protein] + ATP = O-phospho-L-seryl-[protein] + ADP + H(+). It catalyses the reaction L-threonyl-[protein] + ATP = O-phospho-L-threonyl-[protein] + ADP + H(+). It carries out the reaction L-tyrosyl-[protein] + ATP = O-phospho-L-tyrosyl-[protein] + ADP + H(+). Its activity is regulated as follows. Activated during oocyte maturation by phosphorylation on Ser-361 by cdk-1. The pseudotyrosine phosphatases egg-4 and egg-5 sequester activated mbk-2 until the meiotic divisions and inhibit mbk-2 kinase activity directly, using a mixed-inhibition mechanism that does not involve tyrosine dephosphorylation. In terms of biological role, required for oocyte-to-zygote transition in which it phosphorylates oocyte proteins, including mei-1, oma-1, oma-2, mex-5, and mex-6, modifying their activity and/or stability following meiosis. Through phosphorylation of P granule components including meg-1, promotes the disassembly of zygotic P granules in the anterior cytoplasm during zygote polarization, and thus plays a role in P granule distribution and segregation in early stage embryos following meiosis. Functions in both spindle positioning and in the posterior localization of cytoplasmic determinants, including pie-1, pos-1, and pgl-1, in early embryos. Involved in the asymmetric distribution of plk-1 at the 2-cell embryonic stage. The sequence is that of Dual specificity tyrosine-phosphorylation-regulated kinase mbk-2 from Caenorhabditis briggsae.